Consider the following 5207-residue polypeptide: NBPF family member NBPF20 (5207 aa).

Olduvai domains follow at residues 5 to 77 (SREL…PSCP), 80 to 135 (SREL…LDVD), 136 to 228 (RTKK…RSKK), 229 to 321 (ERRR…PSCP), 324 to 379 (SREL…LDVD), 380 to 472 (RTKK…RSKK), 473 to 565 (ERRR…PSCP), 568 to 623 (SREL…LDVD), 624 to 716 (RTKK…RSKK), 717 to 809 (ERRR…PSCP), 812 to 867 (SREL…LDVD), 868 to 960 (RTKK…RSKK), 961 to 1053 (ERRR…PSCP), 1056 to 1111 (SREL…LDVD), 1112 to 1204 (RTKK…RSKK), 1205 to 1297 (ERRR…PSCP), 1300 to 1355 (SREL…LDVD), 1356 to 1448 (RTKK…RSKK), 1449 to 1541 (ERRR…PSCP), 1544 to 1599 (SREL…LDVD), 1600 to 1692 (RTKK…RSKK), 1693 to 1785 (ERRR…PSCP), 1788 to 1843 (SREL…LDVD), 1844 to 1936 (RTKK…RSKK), 1937 to 2029 (ERRR…PSCP), 2032 to 2087 (SREL…LDVD), 2088 to 2180 (RTKK…RSKK), 2181 to 2273 (ERRR…PSCP), 2276 to 2331 (SREL…LDVD), 2332 to 2424 (RTKK…RSKK), 2425 to 2517 (ERRR…PSCP), 2520 to 2575 (SREL…LDVD), 2576 to 2668 (RTKK…RSKK), 2669 to 2761 (ERRR…PSCP), 2764 to 2819 (SREL…LDVD), 2820 to 2912 (RTKK…RSKK), 2913 to 3005 (ERRR…PSCP), 3008 to 3063 (SREL…LDVD), 3064 to 3156 (RTKK…RSKK), 3157 to 3249 (ERRR…PSCP), 3252 to 3307 (SREL…LDVD), 3308 to 3400 (RTKK…RSKK), 3401 to 3493 (ERRR…PSCP), 3496 to 3551 (SREL…LDVD), 3552 to 3644 (RTKK…RSKK), 3645 to 3737 (ERRR…PSCP), 3740 to 3795 (SREL…LDVD), 3796 to 3888 (RTKK…RSKK), 3889 to 3981 (ERRR…PSCP), 3984 to 4039 (SREL…LDVD), 4040 to 4132 (RTKK…RSKK), 4133 to 4225 (ERRR…PSCP), 4228 to 4283 (SREL…LDVD), 4284 to 4376 (RTKK…RSKK), 4377 to 4452 (ERRR…LDVD), 4453 to 4545 (RTKK…RSKK), 4546 to 4621 (ERRR…LDVD), 4622 to 4713 (RTKK…PSCP), 4716 to 4771 (SREL…LDVD), 4772 to 4864 (RTKK…RSKK), 4865 to 4957 (ERRR…PSCP), 4960 to 5015 (SREL…LDVD), 5016 to 5108 (RTKK…RSKK), and 5109 to 5207 (KRRR…IFPQ). Disordered regions lie at residues 137-157 (TKKD…LSRE) and 215-256 (KGKG…LDEK). A compositionally biased stretch (basic residues) spans 216 to 234 (GKGKKRRGRRSKKERRRGR). 2 disordered regions span residues 381–403 (TKKD…RELL) and 459–513 (KGKG…DRSY). Over residues 460 to 478 (GKGKKRRGRRSKKERRRGR) the composition is skewed to basic residues. Residues 492–502 (LSRELLDEKGP) are compositionally biased toward basic and acidic residues. Disordered stretches follow at residues 625-647 (TKKD…RELL) and 703-744 (KGKG…LDEK). Positions 704-722 (GKGKKRRGRRSKKERRRGR) are enriched in basic residues. 2 disordered regions span residues 869–891 (TKKD…RELL) and 947–1001 (KGKG…DRSY). The segment covering 948–966 (GKGKKRRGRRSKKERRRGR) has biased composition (basic residues). A compositionally biased stretch (basic and acidic residues) spans 980 to 990 (LSRELLDEKGP). Disordered stretches follow at residues 1113-1135 (TKKD…RELL) and 1191-1245 (KGKG…DRSY). Over residues 1192 to 1210 (GKGKKRRGRRSKKERRRGR) the composition is skewed to basic residues. A compositionally biased stretch (basic and acidic residues) spans 1224-1234 (LSRELLDEKGP). Disordered regions lie at residues 1357–1379 (TKKD…RELL) and 1435–1489 (KGKG…DRSY). The segment covering 1436-1454 (GKGKKRRGRRSKKERRRGR) has biased composition (basic residues). Basic and acidic residues predominate over residues 1468–1478 (LSRELLDEKGP). Disordered stretches follow at residues 1601–1623 (TKKD…RELL) and 1679–1733 (KGKG…DRSY). Positions 1680–1698 (GKGKKRRGRRSKKERRRGR) are enriched in basic residues. Residues 1712–1722 (LSRELLDEKGP) show a composition bias toward basic and acidic residues. Disordered stretches follow at residues 1845–1867 (TKKD…RELL) and 1923–1964 (KGKG…LDEK). A compositionally biased stretch (basic residues) spans 1924 to 1942 (GKGKKRRGRRSKKERRRGR). Disordered regions lie at residues 2089 to 2111 (TKKD…RELL) and 2167 to 2208 (KGKG…LDEK). The span at 2168-2186 (GKGKKRRGRRSKKERRRGR) shows a compositional bias: basic residues. Disordered stretches follow at residues 2333 to 2355 (TKKD…RELL) and 2411 to 2452 (KGKG…LDEK). Basic residues predominate over residues 2412 to 2430 (GKGKKRRGRRSKKERRRGR). 2 disordered regions span residues 2577–2599 (TKKD…RELL) and 2655–2709 (KGKG…DRSY). Basic residues predominate over residues 2656-2674 (GKGKKRRGRRSKKERRRGR). The segment covering 2688–2698 (LSRELLDEKGP) has biased composition (basic and acidic residues). Disordered regions lie at residues 2821–2843 (TKKD…RELL) and 2899–2953 (KGKG…DRSY). A compositionally biased stretch (basic residues) spans 2900–2918 (GKGKKRRGRRSKKERRRGR). A compositionally biased stretch (basic and acidic residues) spans 2932 to 2942 (LSRELLDEKGP). Disordered stretches follow at residues 3065-3087 (TKKD…RELL) and 3143-3197 (KGKG…DRSY). The span at 3144 to 3162 (GKGKKRRGRRSKKERRRGR) shows a compositional bias: basic residues. Residues 3176–3186 (LSRELLDEKGP) are compositionally biased toward basic and acidic residues. 2 disordered regions span residues 3309-3331 (TKKD…RELL) and 3387-3441 (KGKG…DRSY). Residues 3388 to 3406 (GKGKKRRGRRSKKERRRGR) are compositionally biased toward basic residues. Residues 3420–3430 (LSRELLDEKGP) are compositionally biased toward basic and acidic residues. Disordered regions lie at residues 3553–3575 (TKKD…RELL) and 3631–3672 (KGKG…LDEK). Over residues 3632 to 3650 (GKGKKRRGRRSKKERRRGR) the composition is skewed to basic residues. Disordered regions lie at residues 3797 to 3819 (TKKD…RELL) and 3875 to 3916 (KGKG…LDEK). Positions 3876–3894 (GKGKKRRGRRSKKERRRGR) are enriched in basic residues. Disordered stretches follow at residues 4041 to 4063 (TKKD…RELL) and 4119 to 4160 (KGKG…LDEK). The span at 4120 to 4138 (GKGKKRRGRRSKKERRRGR) shows a compositional bias: basic residues. 4 disordered regions span residues 4285–4307 (TKKD…RELL), 4361–4404 (EKKG…LDEK), 4453–4474 (RTKK…LSRE), and 4530–4573 (EKKG…LDEK). Basic residues predominate over residues 4364 to 4382 (GKGKKRRGRRSKKERRRGR). Over residues 4533–4551 (GKGKKRRGRRSKKERRRGR) the composition is skewed to basic residues. Disordered stretches follow at residues 4773-4793 (TKKD…LSRE) and 4851-4889 (KGKG…RELL). Basic residues predominate over residues 4852–4870 (GKGKKRRGRRSKKERRRGR). 2 disordered regions span residues 5017–5037 (TKKD…LSRE) and 5094–5128 (KKGK…CPRL). Residues 5096–5114 (GKGKKRRGRRSKKKRRRGR) show a composition bias toward basic residues.

This sequence belongs to the NBPF family.

The protein resides in the cytoplasm. This Homo sapiens (Human) protein is NBPF family member NBPF20.